The chain runs to 461 residues: Cysteine--tRNA ligase (461 aa).

Cys-28 is a binding site for Zn(2+). Residues 30–40 carry the 'HIGH' region motif; that stretch reads ITVYDLCHIGH. Cys-209, His-234, and Glu-238 together coordinate Zn(2+). The 'KMSKS' region signature appears at 266–270; it reads KMSKS. Lys-269 serves as a coordination point for ATP.

Belongs to the class-I aminoacyl-tRNA synthetase family. Monomer. The cofactor is Zn(2+).

The protein localises to the cytoplasm. It catalyses the reaction tRNA(Cys) + L-cysteine + ATP = L-cysteinyl-tRNA(Cys) + AMP + diphosphate. The chain is Cysteine--tRNA ligase from Escherichia coli (strain 55989 / EAEC).